Here is a 1034-residue protein sequence, read N- to C-terminus: FERM domain-containing protein 4B (1034 aa).

The FERM domain maps to 59–361 (RHCQVHLLDD…SQHQFYLDRK (303 aa)). S372 carries the phosphoserine modification. 2 coiled-coil regions span residues 417–450 (EVSE…ELKK) and 531–561 (KKKR…RCGK). Residues 542–971 (MKKLQEIENA…TQLTIGLSDY (430 aa)) are necessary for adherens junction and tight junction localization. Residues 576 to 589 (PSESSSLSDTTTYD) are compositionally biased toward low complexity. Disordered stretches follow at residues 576–614 (PSES…ILPP), 635–698 (DTRQ…LESQ), 712–735 (FSLS…YTSQ), and 752–786 (TTQT…AQKD). S608 is subject to Phosphoserine. Polar residues-rich tracts occupy residues 635–650 (DTRQ…SSPY) and 663–674 (MPTTPVLTRNAY). The span at 675-685 (SSSHLEPESSS) shows a compositional bias: low complexity. A Phosphoserine modification is found at S697. Positions 713 to 722 (SLSKSQRSSS) are enriched in low complexity. Over residues 769–781 (QNVSTSNSGSMPN) the composition is skewed to polar residues. A Glycyl lysine isopeptide (Lys-Gly) (interchain with G-Cter in SUMO2) cross-link involves residue K882. Disordered stretches follow at residues 905-925 (RASG…SDRG) and 1004-1034 (DGTD…GTLV). Polar residues predominate over residues 906 to 920 (ASGQKDQGHSPQTSF). S915 is modified (phosphoserine). Residues 1018–1034 (SEQRLFWHEDSKPGTLV) show a composition bias toward basic and acidic residues. A Glycyl lysine isopeptide (Lys-Gly) (interchain with G-Cter in SUMO2) cross-link involves residue K1029.

As to quaternary structure, interacts with CYTH3. Interacts with PARD3. Interacts with CYTH1.

The protein localises to the cytoplasm. It localises to the cytoskeleton. The protein resides in the cell junction. Its subcellular location is the tight junction. It is found in the adherens junction. Its function is as follows. Member of GRP1 signaling complexes that are acutely recruited to plasma membrane ruffles in response to insulin receptor signaling. May function as a scaffolding protein that regulates epithelial cell polarity by connecting ARF6 activation with the PAR3 complex. Plays a redundant role with FRMD4A in epithelial polarization. The sequence is that of FERM domain-containing protein 4B from Homo sapiens (Human).